The primary structure comprises 176 residues: Large ribosomal subunit protein uL6 (176 aa).

This sequence belongs to the universal ribosomal protein uL6 family. Part of the 50S ribosomal subunit.

Its function is as follows. This protein binds to the 23S rRNA, and is important in its secondary structure. It is located near the subunit interface in the base of the L7/L12 stalk, and near the tRNA binding site of the peptidyltransferase center. This Lactobacillus delbrueckii subsp. bulgaricus (strain ATCC 11842 / DSM 20081 / BCRC 10696 / JCM 1002 / NBRC 13953 / NCIMB 11778 / NCTC 12712 / WDCM 00102 / Lb 14) protein is Large ribosomal subunit protein uL6.